We begin with the raw amino-acid sequence, 455 residues long: Bifunctional protein GlmU (455 aa).

Residues 1–226 (MSLEIVILAA…AMEVQGANDR (226 aa)) are pyrophosphorylase. UDP-N-acetyl-alpha-D-glucosamine-binding positions include 8–11 (LAAG), Lys22, Gln73, 78–79 (GT), 99–101 (YGD), Gly136, Glu151, Asn166, and Asn224. Asp101 contributes to the Mg(2+) binding site. Asn224 lines the Mg(2+) pocket. Residues 227 to 247 (KQLAELERHYQLRAGRRLMAQ) form a linker region. The N-acetyltransferase stretch occupies residues 248 to 455 (GVTLRDPARF…WKRPEKIKKD (208 aa)). Positions 330 and 348 each coordinate UDP-N-acetyl-alpha-D-glucosamine. Residue His360 is the Proton acceptor of the active site. UDP-N-acetyl-alpha-D-glucosamine is bound by residues Tyr363 and Asn374. Acetyl-CoA contacts are provided by residues Ala377, 383–384 (NY), Ser402, Ala420, and Arg437.

It in the N-terminal section; belongs to the N-acetylglucosamine-1-phosphate uridyltransferase family. In the C-terminal section; belongs to the transferase hexapeptide repeat family. In terms of assembly, homotrimer. Mg(2+) serves as cofactor.

It is found in the cytoplasm. The catalysed reaction is alpha-D-glucosamine 1-phosphate + acetyl-CoA = N-acetyl-alpha-D-glucosamine 1-phosphate + CoA + H(+). It carries out the reaction N-acetyl-alpha-D-glucosamine 1-phosphate + UTP + H(+) = UDP-N-acetyl-alpha-D-glucosamine + diphosphate. It functions in the pathway nucleotide-sugar biosynthesis; UDP-N-acetyl-alpha-D-glucosamine biosynthesis; N-acetyl-alpha-D-glucosamine 1-phosphate from alpha-D-glucosamine 6-phosphate (route II): step 2/2. Its pathway is nucleotide-sugar biosynthesis; UDP-N-acetyl-alpha-D-glucosamine biosynthesis; UDP-N-acetyl-alpha-D-glucosamine from N-acetyl-alpha-D-glucosamine 1-phosphate: step 1/1. It participates in bacterial outer membrane biogenesis; LPS lipid A biosynthesis. In terms of biological role, catalyzes the last two sequential reactions in the de novo biosynthetic pathway for UDP-N-acetylglucosamine (UDP-GlcNAc). The C-terminal domain catalyzes the transfer of acetyl group from acetyl coenzyme A to glucosamine-1-phosphate (GlcN-1-P) to produce N-acetylglucosamine-1-phosphate (GlcNAc-1-P), which is converted into UDP-GlcNAc by the transfer of uridine 5-monophosphate (from uridine 5-triphosphate), a reaction catalyzed by the N-terminal domain. The sequence is that of Bifunctional protein GlmU from Pseudomonas fluorescens (strain ATCC BAA-477 / NRRL B-23932 / Pf-5).